The following is a 194-amino-acid chain: Thymidylate kinase (194 aa).

7–14 contributes to the ATP binding site; that stretch reads GVDGVGKS.

It belongs to the thymidylate kinase family.

It catalyses the reaction dTMP + ATP = dTDP + ADP. Functionally, phosphorylation of dTMP to form dTDP in both de novo and salvage pathways of dTTP synthesis. This is Thymidylate kinase from Campylobacter curvus (strain 525.92).